The chain runs to 448 residues: Chromosomal replication initiator protein DnaA (448 aa).

The domain I, interacts with DnaA modulators stretch occupies residues 1-93 (MEQIVSSLWS…KPTEQNLSAS (93 aa)). The tract at residues 94-110 (STNKEELTQDTVHKFKT) is domain II. The segment at 111–328 (GLNGRLTFDN…GAINRVSAWC (218 aa)) is domain III, AAA+ region. 4 residues coordinate ATP: Gly-156, Gly-158, Lys-159, and Thr-160. Residues 329-448 (NFTKRQITID…YTNLTRKLSS (120 aa)) form a domain IV, binds dsDNA region.

The protein belongs to the DnaA family. Oligomerizes as a right-handed, spiral filament on DNA at oriC.

It localises to the cytoplasm. Functionally, plays an essential role in the initiation and regulation of chromosomal replication. ATP-DnaA binds to the origin of replication (oriC) to initiate formation of the DNA replication initiation complex once per cell cycle. Binds the DnaA box (a 9 base pair repeat at the origin) and separates the double-stranded (ds)DNA. Forms a right-handed helical filament on oriC DNA; dsDNA binds to the exterior of the filament while single-stranded (ss)DNA is stabiized in the filament's interior. The ATP-DnaA-oriC complex binds and stabilizes one strand of the AT-rich DNA unwinding element (DUE), permitting loading of DNA polymerase. After initiation quickly degrades to an ADP-DnaA complex that is not apt for DNA replication. Binds acidic phospholipids. This is Chromosomal replication initiator protein DnaA from Haemophilus ducreyi (strain 35000HP / ATCC 700724).